A 292-amino-acid polypeptide reads, in one-letter code: uncharacterized protein (292 aa).

Helical transmembrane passes span 57-77, 101-121, 143-163, 184-204, and 271-291; these read IISL…LTLI, VYVF…FNFM, LIYA…AVLI, VVIT…NFVL, and IAFL…DRGI.

It belongs to the CbiQ family.

It is found in the cell membrane. This is an uncharacterized protein from Methanocaldococcus jannaschii (strain ATCC 43067 / DSM 2661 / JAL-1 / JCM 10045 / NBRC 100440) (Methanococcus jannaschii).